A 592-amino-acid chain; its full sequence is Imidazole glycerol phosphate synthase hisHF, chloroplastic (592 aa).

The transit peptide at 1 to 55 (MEATAAPFSSIVSSRQNFSSSSSIRASSPASLFLSQKSIGNVNRKFKSPRSLSVR) directs the protein to the chloroplast. The Glutamine amidotransferase type-1 domain occupies 63-271 (VVTLLDYGAG…LHPKLPATQK (209 aa)). Residues cysteine 141, histidine 246, and glutamate 248 each act as for GATase activity in the active site. The segment at 280–592 (LAKRVIACLD…LQEERIEVRI (313 aa)) is cyclase. Catalysis depends on residues aspartate 289 and aspartate 447.

In the C-terminal section; belongs to the HisA/HisF family.

The protein localises to the plastid. The protein resides in the chloroplast. The enzyme catalyses 5-[(5-phospho-1-deoxy-D-ribulos-1-ylimino)methylamino]-1-(5-phospho-beta-D-ribosyl)imidazole-4-carboxamide + L-glutamine = D-erythro-1-(imidazol-4-yl)glycerol 3-phosphate + 5-amino-1-(5-phospho-beta-D-ribosyl)imidazole-4-carboxamide + L-glutamate + H(+). It carries out the reaction L-glutamine + H2O = L-glutamate + NH4(+). It functions in the pathway amino-acid biosynthesis; L-histidine biosynthesis; L-histidine from 5-phospho-alpha-D-ribose 1-diphosphate: step 5/9. In terms of biological role, IGPS catalyzes the conversion of PRFAR and glutamine to IGP, AICAR and glutamate. The glutaminase domain produces the ammonia necessary for the cyclase domain to produce IGP and AICAR from PRFAR. The ammonia is channeled to the active site of the cyclase domain. This chain is Imidazole glycerol phosphate synthase hisHF, chloroplastic (HISN4), found in Arabidopsis thaliana (Mouse-ear cress).